We begin with the raw amino-acid sequence, 304 residues long: MQIQILGSAAGGGFPQWNCNCRNCRGVRAGTLRAQPRTQSSIAISDEGEQWILCNASPDIRAQIEAFPALQPARKLRDTAIAGIVLLDSQIDHCTGLLTLREGCPHQVWCTEMVHQDLTTGFPLFNMLSHWNGGLQHRLIELDAKPFSIPACPGLRINAIALRSSAPPYSPHRGNPHPGDNIGLFIEDLRTGGTLFYAPGLGQVDEQLLGWMRRADCLLVDGTLWRDDEMRVCEVGDKLGSEMGHLCQSGPGGMIELLDGLPTARKILIHINNTNPILDLDSPERAELDAHGIEVAFDGMSIVL.

The protein belongs to the PqqB family.

It functions in the pathway cofactor biosynthesis; pyrroloquinoline quinone biosynthesis. Its function is as follows. May be involved in the transport of PQQ or its precursor to the periplasm. The protein is Coenzyme PQQ synthesis protein B of Ectopseudomonas mendocina (strain ymp) (Pseudomonas mendocina).